Consider the following 372-residue polypeptide: Cytochrome b (372 aa).

Transmembrane regions (helical) follow at residues 25–45, 69–90, 105–125, and 170–190; these read FGSM…FLAI, WIMQ…YIHI, WLSG…GYVL, and FFAL…IHII. Residues histidine 75 and histidine 89 each coordinate heme b. Heme b contacts are provided by histidine 174 and histidine 188. Histidine 193 is a binding site for a ubiquinone. The next 4 helical transmembrane spans lie at 218 to 238, 280 to 300, 312 to 332, and 339 to 358; these read YKDM…LSFS, LGGT…PFTH, LTQT…WTAT, and FISI…IINP.

The protein belongs to the cytochrome b family. The cytochrome bc1 complex contains 3 respiratory subunits (MT-CYB, CYC1 and UQCRFS1), 2 core proteins (UQCRC1 and UQCRC2) and probably 6 low-molecular weight proteins. Heme b serves as cofactor.

Its subcellular location is the mitochondrion inner membrane. In terms of biological role, component of the ubiquinol-cytochrome c reductase complex (complex III or cytochrome b-c1 complex) that is part of the mitochondrial respiratory chain. The b-c1 complex mediates electron transfer from ubiquinol to cytochrome c. Contributes to the generation of a proton gradient across the mitochondrial membrane that is then used for ATP synthesis. In Dendroaspis polylepis polylepis (Black mamba), this protein is Cytochrome b (MT-CYB).